The primary structure comprises 451 residues: MPSVVSPQDHLQDDAPAAQLRRAEPCLWLNPHRQPIPAARQAVAGDHISLDDTEKAAARFARFAPLLEGVFPELQATGGVIESPLLPASSLHAAAGLVAGQGALWIKADHRLPVAGSIKARGGIHEVLELAERLALQHGLLTPQSDADDYRALANPAARAVFARYTVAVGSTGNLGLSIGVAASALGFHAVVHMSADAKEWKKQRLRQRGVQVVEHAGDYEGAVAAGRAQAAQDPFSHFVDDERSLSLLLGYSAAALHLRQQLRDAGIVVDAQHPLFVYLPCGVGGAPAGITFGLRQVLGAHVHCFFAEPVQSPCFMVQMMAGQGAHPSVYDWGLTNRTEADGLAVPRASLPAAELMEPLLAGCFTVCDDTLFRQLVQVLDATGERIEPSAAAGLSGPGFLTGTETGRTWLHAQGLWPHLAQATHLVWTTGGLYVPPEAYARFEERGRALG.

K119 bears the N6-(pyridoxal phosphate)lysine mark.

The protein belongs to the serine/threonine dehydratase family. DsdA subfamily. It depends on pyridoxal 5'-phosphate as a cofactor.

The enzyme catalyses D-serine = pyruvate + NH4(+). The sequence is that of Probable D-serine dehydratase from Acidovorax sp. (strain JS42).